Consider the following 234-residue polypeptide: Thioredoxin-dependent peroxide reductase, mitochondrial (234 aa).

The N-terminal 30 residues, 1–30, are a transit peptide targeting the mitochondrion; it reads MSFVARSLIRNVPLMGKAILSQQKQIAARL. One can recognise a Thioredoxin domain in the interval 40–198; sequence VRVQQPAPDF…VLRLIKAFQF (159 aa). Cys85 serves as the catalytic Cysteine sulfenic acid (-SOH) intermediate.

It belongs to the peroxiredoxin family. AhpC/Prx1 subfamily. In terms of assembly, homodimer; disulfide-linked, upon oxidation. 6 homodimers assemble to form a ring-like dodecamer. Also exists as a monomer, however the monomeric form is present at a much lower level than the homodimeric form. Expressed in thoracic flight muscles (at protein level). Detected in the head and body (at protein level).

It localises to the mitochondrion. The catalysed reaction is a hydroperoxide + [thioredoxin]-dithiol = an alcohol + [thioredoxin]-disulfide + H2O. Thiol-specific peroxidase that catalyzes the reduction of hydrogen peroxide and organic hydroperoxides to water and alcohols, respectively. Plays a role in cell protection against oxidative stress by detoxifying peroxides. May be involved in aging-associated changes in the responsiveness to oxidative stress. Involved in the maintenance of global thiol redox homeostasis. Functions in the central nervous system (CNS) and in motor neurons and is essential for normal motor function. The sequence is that of Thioredoxin-dependent peroxide reductase, mitochondrial from Drosophila melanogaster (Fruit fly).